Consider the following 352-residue polypeptide: MQFVYDPLPYRVIFGAGSVRRVADELSHVGSRALVLSTPEQAGSAQELAATLGDKAVGLFSKAVMHVPVATVDAAAAVARELDADCTVAIGGGSTVGLAKALSLRLDLPSLVVPTTYAGSEVTPIWGLTEDGIKTTGRDKKVLPKVVVYDPDLTLSLPAEMSIASGLNAIAHAMEGLYAFDGNPIVSLMAEESIRALARSLPLIKADPTDAKARGDALYGCWLAGSVLGAASVALHHKLCHTLGGTFDMPHAQTHTAVLPHAIAYNAPSVPEAMERASRALGGGDPATKLYELAVGLGAEMSLAKLGMPKDGIAKAAALAVANPYPNPRPITEEGIVQLLSRAVEGLPPITA.

NAD(+) is bound by residues 93–94 (GS) and 115–119 (TTYAG).

Belongs to the iron-containing alcohol dehydrogenase family. The maleylacetate reductase family of enzymes does not require any metal ion for activity, despite being related to the family III metal-dependent polyol dehydrogenases. is required as a cofactor.

The enzyme catalyses 3-oxoadipate + NAD(+) = maleylacetate + NADH + H(+). It participates in xenobiotic degradation; gamma-hexachlorocyclohexane degradation. In terms of biological role, catalyzes the NADH-dependent reduction of maleylacetate to beta-ketoadipate, a step in the degradation of gamma-hexachlorocyclohexane (gamma-HCH or lindane). Has an essential role in this assimilation pathway that allows S.japonicum UT26 to grow on gamma-HCH as the sole source of carbon and energy. The polypeptide is Maleylacetate reductase (Sphingobium indicum (strain DSM 16413 / CCM 7287 / MTCC 6362 / UT26 / NBRC 101211 / UT26S) (Sphingobium japonicum)).